Here is a 356-residue protein sequence, read N- to C-terminus: Histidinol-phosphate aminotransferase (356 aa).

K214 carries the post-translational modification N6-(pyridoxal phosphate)lysine.

Belongs to the class-II pyridoxal-phosphate-dependent aminotransferase family. Histidinol-phosphate aminotransferase subfamily. As to quaternary structure, homodimer. Pyridoxal 5'-phosphate is required as a cofactor.

It catalyses the reaction L-histidinol phosphate + 2-oxoglutarate = 3-(imidazol-4-yl)-2-oxopropyl phosphate + L-glutamate. It functions in the pathway amino-acid biosynthesis; L-histidine biosynthesis; L-histidine from 5-phospho-alpha-D-ribose 1-diphosphate: step 7/9. This Shigella dysenteriae serotype 1 (strain Sd197) protein is Histidinol-phosphate aminotransferase.